Reading from the N-terminus, the 361-residue chain is Phospho-N-acetylmuramoyl-pentapeptide-transferase (361 aa).

10 helical membrane passes run 25–45, 72–92, 95–115, 135–155, 169–189, 200–220, 240–260, 264–284, 289–309, and 338–358; these read TGGAMVTGALFVFMFGPWIID, TPTMGGLMILSGLTVGTLLWA, LNPYVWIVLAVTLGFGFVGFY, LLIEFTIAGAACFALVWLGRA, VMLNLGWAFVVFGAFVVVGAG, GLAIVPVMIAAASFGLISYLA, LAVLCGALLGAGLGFLWFNAP, IFMGDTGSLALGGMLGSIAVA, IVLAVIGGLFVLEAVSVIVQV, and QIVIRFWIIAVMLALAGLSTL.

It belongs to the glycosyltransferase 4 family. MraY subfamily. Requires Mg(2+) as cofactor.

Its subcellular location is the cell inner membrane. The catalysed reaction is UDP-N-acetyl-alpha-D-muramoyl-L-alanyl-gamma-D-glutamyl-meso-2,6-diaminopimeloyl-D-alanyl-D-alanine + di-trans,octa-cis-undecaprenyl phosphate = di-trans,octa-cis-undecaprenyl diphospho-N-acetyl-alpha-D-muramoyl-L-alanyl-D-glutamyl-meso-2,6-diaminopimeloyl-D-alanyl-D-alanine + UMP. The protein operates within cell wall biogenesis; peptidoglycan biosynthesis. Functionally, catalyzes the initial step of the lipid cycle reactions in the biosynthesis of the cell wall peptidoglycan: transfers peptidoglycan precursor phospho-MurNAc-pentapeptide from UDP-MurNAc-pentapeptide onto the lipid carrier undecaprenyl phosphate, yielding undecaprenyl-pyrophosphoryl-MurNAc-pentapeptide, known as lipid I. This Rhodopseudomonas palustris (strain ATCC BAA-98 / CGA009) protein is Phospho-N-acetylmuramoyl-pentapeptide-transferase.